The primary structure comprises 376 residues: MKVLTVFGTRPEAIKMAPLVHALAKDPFFEAKVCVTAQHREMLDQVLKLFSIVPDYDLNIMQPGQGLTEITCRILEGLKPILAEFKPDVVLVHGDTTTTLATSLAAFYQRIPVGHVEAGLRTGDLYSPWPEEANRTLTGHLAMYHFSPTETSRQNLLRENVADSRIFITGNTVIDALLWVRDQVMSSDTLRSELAANYPFIDPDKKMILVTGHRRESFGRGFEEICHALADIATTHQDIQIVYPVHLNPNVREPVNRILGHVKNVILIDPQEYLPFVWLMNHAWLILTDSGGIQEEAPSLGKPVLVMRDTTERPEAVTAGTVRLVGTDKQRIVEEVTRLLKDENEYQTMSRAHNPYGDGQACSRILEALKNNRISL.

Substrate-binding positions include R10, K15, D95, E117, H213, Q271, F276, 290–292 (SGG), E296, and R313.

The protein belongs to the UDP-N-acetylglucosamine 2-epimerase family. Homodimer.

The protein resides in the cytoplasm. It catalyses the reaction UDP-N-acetyl-alpha-D-glucosamine = UDP-N-acetyl-alpha-D-mannosamine. Its pathway is bacterial outer membrane biogenesis; enterobacterial common antigen biosynthesis. Catalyzes the reversible epimerization at C-2 of UDP-N-acetylglucosamine (UDP-GlcNAc) and thereby provides bacteria with UDP-N-acetylmannosamine (UDP-ManNAc), the activated donor of ManNAc residues. In Escherichia coli O157:H7, this protein is UDP-N-acetylglucosamine 2-epimerase.